The sequence spans 637 residues: DNA primase (637 aa).

The CHC2-type zinc finger occupies 39-63 (CPFHGEKTPSFNVNAEKGFYHCFGC). In terms of domain architecture, Toprim spans 257–338 (HEVYLMEGFM…QIVKVPEGLD (82 aa)). Residues Glu-263, Asp-307, and Asp-309 each coordinate Mg(2+).

This sequence belongs to the DnaG primase family. As to quaternary structure, monomer. Interacts with DnaB. Requires Zn(2+) as cofactor. The cofactor is Mg(2+).

It carries out the reaction ssDNA + n NTP = ssDNA/pppN(pN)n-1 hybrid + (n-1) diphosphate.. Its function is as follows. RNA polymerase that catalyzes the synthesis of short RNA molecules used as primers for DNA polymerase during DNA replication. This is DNA primase from Lactococcus lactis subsp. lactis (strain IL1403) (Streptococcus lactis).